Reading from the N-terminus, the 306-residue chain is Ribosomal protein L11 methyltransferase (306 aa).

S-adenosyl-L-methionine is bound by residues threonine 152, glycine 179, aspartate 201, and asparagine 243.

Belongs to the methyltransferase superfamily. PrmA family.

The protein localises to the cytoplasm. The enzyme catalyses L-lysyl-[protein] + 3 S-adenosyl-L-methionine = N(6),N(6),N(6)-trimethyl-L-lysyl-[protein] + 3 S-adenosyl-L-homocysteine + 3 H(+). Its function is as follows. Methylates ribosomal protein L11. The protein is Ribosomal protein L11 methyltransferase of Citrifermentans bemidjiense (strain ATCC BAA-1014 / DSM 16622 / JCM 12645 / Bem) (Geobacter bemidjiensis).